A 263-amino-acid chain; its full sequence is Versicolorin reductase 1 (263 aa).

The NADP(+) site is built by Ile-22, Asp-68, Asn-95, and Arg-128. Catalysis depends on proton donor residues Ser-144 and Ser-145. NADP(+) contacts are provided by Tyr-159, Lys-163, Ile-192, and Thr-194. The Proton acceptor role is filled by Tyr-159. Catalysis depends on Lys-163, which acts as the Lowers pKa of active site Tyr.

The protein belongs to the short-chain dehydrogenases/reductases (SDR) family.

It localises to the cytoplasm. The protein localises to the cytosol. The protein operates within mycotoxin biosynthesis. Its function is as follows. Versicolorin reductase; part of the fragmented gene cluster that mediates the biosynthesis of dothistromin (DOTH), a polyketide toxin very similar in structure to the aflatoxin precursor, versicolorin B. The first step of the pathway is the conversion of acetate to norsolorinic acid (NOR) and requires the fatty acid synthase subunits hexA and hexB, as well as the polyketide synthase pksA. PksA combines a hexanoyl starter unit and 7 malonyl-CoA extender units to synthesize the precursor NOR. The hexanoyl starter unit is provided to the acyl-carrier protein (ACP) domain by the fungal fatty acid synthase hexA/hexB. The second step is the conversion of NOR to averantin (AVN) and requires the norsolorinic acid ketoreductase nor1, which catalyzes the dehydration of norsolorinic acid to form (1'S)-averantin. The cytochrome P450 monooxygenase avnA then catalyzes the hydroxylation of AVN to 5'hydroxyaverantin (HAVN). The next step is performed by adhA that transforms HAVN to averufin (AVF). Averufin might then be converted to hydroxyversicolorone by cypX and avfA. Hydroxyversicolorone is further converted versiconal hemiacetal acetate (VHA) by moxY. VHA is then the substrate for the versiconal hemiacetal acetate esterase est1 to yield versiconal (VAL). Versicolorin B synthase vbsA then converts VAL to versicolorin B (VERB) by closing the bisfuran ring. Then, the activity of the versicolorin B desaturase verB leads to versicolorin A (VERA). DotB, a predicted chloroperoxidase, may perform epoxidation of the A-ring of VERA. Alternatively, a cytochrome P450, such as cypX or avnA could catalyze this step. It is also possible that another, uncharacterized, cytochrome P450 enzyme is responsible for this step. Opening of the epoxide could potentially be achieved by the epoxide hydrolase epoA. However, epoA seems not to be required for DOTH biosynthesis, but other epoxide hydrolases may have the ability to complement this hydrolysis. Alternatively, opening of the epoxide ring could be achieved non-enzymatically. The next step is the deoxygenation of ring A to yield the 5,8-dihydroxyanthraquinone which is most likely catalyzed by the NADPH dehydrogenase encoded by ver1. The last stages of DOTH biosynthesis are proposed to involve hydroxylation of the bisfuran. OrdB and norB might have oxidative roles here. An alternative possibility is that cytochrome P450 monoogenases such as avnA and cypX might perform these steps in addition to previously proposed steps. This Dothistroma septosporum (Red band needle blight fungus) protein is Versicolorin reductase 1.